The primary structure comprises 146 residues: Hemoglobin subunit beta (146 aa).

N-acetylvaline is present on Val-1. The 145-residue stretch at 2–146 (HLTGEEKSAV…VANALAHKYH (145 aa)) folds into the Globin domain. Residue Thr-12 is modified to Phosphothreonine. A Phosphoserine modification is found at Ser-44. N6-acetyllysine is present on Lys-59. His-63 is a binding site for heme b. Lys-82 carries the post-translational modification N6-acetyllysine. Residue His-92 participates in heme b binding. Cys-93 is subject to S-nitrosocysteine. Lys-144 is modified (N6-acetyllysine).

The protein belongs to the globin family. In terms of assembly, heterotetramer of two alpha chains and two beta chains. Red blood cells.

Involved in oxygen transport from the lung to the various peripheral tissues. In Saguinus mystax (Moustached tamarin), this protein is Hemoglobin subunit beta (HBB).